Reading from the N-terminus, the 458-residue chain is tRNA-2-methylthio-N(6)-dimethylallyladenosine synthase (458 aa).

The 120-residue stretch at 15–134 (KKVFIKTYGC…LPELLEKAKQ (120 aa)) folds into the MTTase N-terminal domain. Cysteine 24, cysteine 60, cysteine 97, cysteine 175, cysteine 179, and cysteine 182 together coordinate [4Fe-4S] cluster. The Radical SAM core domain maps to 161–395 (RKRGVSAFLT…LLLEQQNTFL (235 aa)). One can recognise a TRAM domain in the interval 396 to 457 (RSKIGQKTDV…SNSFVGEMTN (62 aa)).

The protein belongs to the methylthiotransferase family. MiaB subfamily. As to quaternary structure, monomer. It depends on [4Fe-4S] cluster as a cofactor.

It is found in the cytoplasm. The catalysed reaction is N(6)-dimethylallyladenosine(37) in tRNA + (sulfur carrier)-SH + AH2 + 2 S-adenosyl-L-methionine = 2-methylsulfanyl-N(6)-dimethylallyladenosine(37) in tRNA + (sulfur carrier)-H + 5'-deoxyadenosine + L-methionine + A + S-adenosyl-L-homocysteine + 2 H(+). In terms of biological role, catalyzes the methylthiolation of N6-(dimethylallyl)adenosine (i(6)A), leading to the formation of 2-methylthio-N6-(dimethylallyl)adenosine (ms(2)i(6)A) at position 37 in tRNAs that read codons beginning with uridine. The protein is tRNA-2-methylthio-N(6)-dimethylallyladenosine synthase of Bartonella tribocorum (strain CIP 105476 / IBS 506).